Here is a 341-residue protein sequence, read N- to C-terminus: tRNA N6-adenosine threonylcarbamoyltransferase (341 aa).

His115 and His119 together coordinate Fe cation. Residues Ala137–Gly141, Asp170, Gly183, Asp187, and Asn276 each bind substrate. Asp306 provides a ligand contact to Fe cation.

Belongs to the KAE1 / TsaD family. Fe(2+) serves as cofactor.

The protein resides in the cytoplasm. It carries out the reaction L-threonylcarbamoyladenylate + adenosine(37) in tRNA = N(6)-L-threonylcarbamoyladenosine(37) in tRNA + AMP + H(+). Its function is as follows. Required for the formation of a threonylcarbamoyl group on adenosine at position 37 (t(6)A37) in tRNAs that read codons beginning with adenine. Is involved in the transfer of the threonylcarbamoyl moiety of threonylcarbamoyl-AMP (TC-AMP) to the N6 group of A37, together with TsaE and TsaB. TsaD likely plays a direct catalytic role in this reaction. This Lacticaseibacillus casei (strain BL23) (Lactobacillus casei) protein is tRNA N6-adenosine threonylcarbamoyltransferase.